The primary structure comprises 402 residues: Propionate kinase (402 aa).

2 residues coordinate ATP: Asn11 and Lys18. Asn11 contacts Mg(2+). Position 86 (Arg86) interacts with substrate. The active-site Proton donor/acceptor is the Asp143. ATP is bound by residues His175, 203–207, 278–280, and 326–330; these read HLGNG, DLR, and GIGEN.

Belongs to the acetokinase family. TdcD subfamily. Homodimer. The cofactor is Mg(2+).

The enzyme catalyses propanoate + ATP = propanoyl phosphate + ADP. It participates in amino-acid degradation; L-threonine degradation via propanoate pathway; propanoate from L-threonine: step 4/4. Functionally, catalyzes the conversion of propionyl phosphate and ADP to propionate and ATP. The polypeptide is Propionate kinase (Enterobacter sp. (strain 638)).